Reading from the N-terminus, the 708-residue chain is Fatty acid oxidation complex subunit alpha (708 aa).

Positions 1–191 are enoyl-CoA hydratase; it reads MDNNNAFQLS…KLGVVDACVP (191 aa). The 3-hydroxyacyl-CoA dehydrogenase stretch occupies residues 311–708; it reads APVAAVGVLG…RAGLGEKFYP (398 aa).

This sequence in the N-terminal section; belongs to the enoyl-CoA hydratase/isomerase family. In the central section; belongs to the 3-hydroxyacyl-CoA dehydrogenase family. As to quaternary structure, heterotetramer of two alpha chains (FadJ) and two beta chains (FadI).

The protein resides in the cytoplasm. The catalysed reaction is a (3S)-3-hydroxyacyl-CoA = a (2E)-enoyl-CoA + H2O. It carries out the reaction a 4-saturated-(3S)-3-hydroxyacyl-CoA = a (3E)-enoyl-CoA + H2O. The enzyme catalyses a (3S)-3-hydroxyacyl-CoA + NAD(+) = a 3-oxoacyl-CoA + NADH + H(+). It catalyses the reaction (3S)-3-hydroxybutanoyl-CoA = (3R)-3-hydroxybutanoyl-CoA. Its pathway is lipid metabolism; fatty acid beta-oxidation. Its function is as follows. Catalyzes the formation of a hydroxyacyl-CoA by addition of water on enoyl-CoA. Also exhibits 3-hydroxyacyl-CoA epimerase and 3-hydroxyacyl-CoA dehydrogenase activities. The chain is Fatty acid oxidation complex subunit alpha from Vibrio cholerae serotype O1 (strain ATCC 39315 / El Tor Inaba N16961).